Consider the following 210-residue polypeptide: Small ribosomal subunit protein uS4 (210 aa).

The S4 RNA-binding domain maps to 99-170; sequence RRLDNAVFRA…NLEAVVRRGV (72 aa).

This sequence belongs to the universal ribosomal protein uS4 family. Part of the 30S ribosomal subunit. Contacts protein S5. The interaction surface between S4 and S5 is involved in control of translational fidelity.

Its function is as follows. One of the primary rRNA binding proteins, it binds directly to 16S rRNA where it nucleates assembly of the body of the 30S subunit. Functionally, with S5 and S12 plays an important role in translational accuracy. The chain is Small ribosomal subunit protein uS4 from Desulfotalea psychrophila (strain LSv54 / DSM 12343).